Consider the following 262-residue polypeptide: MRIALVVEYDGSQYHGWQAQTGLHTIQQAVEFALSKVADSSISVVCAGRTDTGVHATNQVIHFDCEKDRSIRAWIHGANTFLPKDICVKWGKEMPENFHARYSAVSRRYRYVIYNGAIRPGLLRGNVTWQYRQLDHRLMQQGGQCLLGENDFTSFRSVECQSNTPMRNIHQLQVTRHGDLVVLDITANAFLHHMVRNIAGVLIAVGSGKHPVGWVKDVLNAKDRKLGAETAPSYGLYLVQVTYPKEFGLLQNNPGPLFLWEK.

Residue Asp-51 is the Nucleophile of the active site. Position 109 (Tyr-109) interacts with substrate.

The protein belongs to the tRNA pseudouridine synthase TruA family. Homodimer.

The enzyme catalyses uridine(38/39/40) in tRNA = pseudouridine(38/39/40) in tRNA. In terms of biological role, formation of pseudouridine at positions 38, 39 and 40 in the anticodon stem and loop of transfer RNAs. The sequence is that of tRNA pseudouridine synthase A from Legionella pneumophila (strain Paris).